The following is a 233-amino-acid chain: Uracil-DNA glycosylase (233 aa).

Asp-70 serves as the catalytic Proton acceptor.

This sequence belongs to the uracil-DNA glycosylase (UDG) superfamily. UNG family.

Its subcellular location is the cytoplasm. The catalysed reaction is Hydrolyzes single-stranded DNA or mismatched double-stranded DNA and polynucleotides, releasing free uracil.. Its function is as follows. Excises uracil residues from the DNA which can arise as a result of misincorporation of dUMP residues by DNA polymerase or due to deamination of cytosine. The protein is Uracil-DNA glycosylase of Helicobacter pylori (strain P12).